A 361-amino-acid polypeptide reads, in one-letter code: 3-dehydroquinate synthase (361 aa).

It belongs to the archaeal-type DHQ synthase family.

It catalyses the reaction 2-amino-2,3,7-trideoxy-D-lyxo-hept-6-ulosonate + NAD(+) + H2O = 3-dehydroquinate + NH4(+) + NADH + H(+). Catalyzes the oxidative deamination and cyclization of 2-amino-3,7-dideoxy-D-threo-hept-6-ulosonic acid (ADH) to yield 3-dehydroquinate (DHQ), which is fed into the canonical shikimic pathway of aromatic amino acid biosynthesis. This is 3-dehydroquinate synthase (aroB') from Methanocaldococcus jannaschii (strain ATCC 43067 / DSM 2661 / JAL-1 / JCM 10045 / NBRC 100440) (Methanococcus jannaschii).